The primary structure comprises 179 residues: Large ribosomal subunit protein uL5 (179 aa).

This sequence belongs to the universal ribosomal protein uL5 family. In terms of assembly, part of the 50S ribosomal subunit; part of the 5S rRNA/L5/L18/L25 subcomplex. Contacts the 5S rRNA and the P site tRNA. Forms a bridge to the 30S subunit in the 70S ribosome.

This is one of the proteins that bind and probably mediate the attachment of the 5S RNA into the large ribosomal subunit, where it forms part of the central protuberance. In the 70S ribosome it contacts protein S13 of the 30S subunit (bridge B1b), connecting the 2 subunits; this bridge is implicated in subunit movement. Contacts the P site tRNA; the 5S rRNA and some of its associated proteins might help stabilize positioning of ribosome-bound tRNAs. This Exiguobacterium sibiricum (strain DSM 17290 / CCUG 55495 / CIP 109462 / JCM 13490 / 255-15) protein is Large ribosomal subunit protein uL5.